Reading from the N-terminus, the 277-residue chain is Sarcosine/dimethylglycine N-methyltransferase (277 aa).

Belongs to the methyltransferase superfamily. Monomer.

The catalysed reaction is sarcosine + 2 S-adenosyl-L-methionine = glycine betaine + 2 S-adenosyl-L-homocysteine + 2 H(+). It carries out the reaction sarcosine + S-adenosyl-L-methionine = N,N-dimethylglycine + S-adenosyl-L-homocysteine + H(+). It catalyses the reaction N,N-dimethylglycine + S-adenosyl-L-methionine = glycine betaine + S-adenosyl-L-homocysteine + H(+). It functions in the pathway amine and polyamine biosynthesis; betaine biosynthesis via glycine pathway; betaine from glycine: step 2/3. It participates in amine and polyamine biosynthesis; betaine biosynthesis via glycine pathway; betaine from glycine: step 3/3. With respect to regulation, inhibited by n-butylic acid and S-adenosyl-L-homocysteine. In terms of biological role, catalyzes the methylation of sarcosine and dimethylglycine to dimethylglycine and betaine, respectively, with S-adenosylmethionine (AdoMet) acting as the methyl donor. Activity with sarcosine is much weaker than activity with dimethylglycine. The polypeptide is Sarcosine/dimethylglycine N-methyltransferase (Aphanothece halophytica).